The chain runs to 176 residues: WASH complex subunit 3 (176 aa).

A coiled-coil region spans residues 47-74 (ETKFVEMERQLQKTEAALIILEAKLASI). Disordered stretches follow at residues 84–123 (ATEA…PESV) and 152–176 (KMQS…GQRE). The segment covering 104-115 (TTEPPTTENPTE) has biased composition (low complexity).

It belongs to the CCDC53 family. As to quaternary structure, component of the WASH complex.

The protein localises to the early endosome. In terms of biological role, acts at least in part as component of the WASH complex which may regulate wash nucleation-promoting factor (NPF) activity and is required for its membrane targeting during endosomal sorting. During embryogenesis, not involved in the wash-dependent developmental migration of hemocytes anteriorly from the tail. The polypeptide is WASH complex subunit 3 (Drosophila melanogaster (Fruit fly)).